The following is a 185-amino-acid chain: Ribosome-recycling factor (185 aa).

It belongs to the RRF family.

The protein resides in the cytoplasm. Its function is as follows. Responsible for the release of ribosomes from messenger RNA at the termination of protein biosynthesis. May increase the efficiency of translation by recycling ribosomes from one round of translation to another. The polypeptide is Ribosome-recycling factor (Heliobacterium modesticaldum (strain ATCC 51547 / Ice1)).